The following is a 312-amino-acid chain: Glycerol-3-phosphate dehydrogenase [NAD(P)+] (312 aa).

Trp11, Arg30, Arg31, and Lys95 together coordinate NADPH. The sn-glycerol 3-phosphate site is built by Lys95, Gly123, and Ser125. Position 127 (Ala127) interacts with NADPH. Sn-glycerol 3-phosphate-binding residues include Lys177, Asp230, Ser240, Arg241, and Asn242. Lys177 (proton acceptor) is an active-site residue. Arg241 contacts NADPH. NADPH-binding residues include Val265 and Glu267.

Belongs to the NAD-dependent glycerol-3-phosphate dehydrogenase family.

Its subcellular location is the cytoplasm. The enzyme catalyses sn-glycerol 3-phosphate + NAD(+) = dihydroxyacetone phosphate + NADH + H(+). The catalysed reaction is sn-glycerol 3-phosphate + NADP(+) = dihydroxyacetone phosphate + NADPH + H(+). It participates in membrane lipid metabolism; glycerophospholipid metabolism. Catalyzes the reduction of the glycolytic intermediate dihydroxyacetone phosphate (DHAP) to sn-glycerol 3-phosphate (G3P), the key precursor for phospholipid synthesis. In Helicobacter pylori (strain P12), this protein is Glycerol-3-phosphate dehydrogenase [NAD(P)+].